The sequence spans 217 residues: Large ribosomal subunit protein bL25 (217 aa).

The segment at 185–217 is disordered; the sequence is TKETVEDEEAEEAAAEGAEETGETGETEEGGDE. The span at 189 to 217 shows a compositional bias: acidic residues; that stretch reads VEDEEAEEAAAEGAEETGETGETEEGGDE.

Belongs to the bacterial ribosomal protein bL25 family. CTC subfamily. As to quaternary structure, part of the 50S ribosomal subunit; part of the 5S rRNA/L5/L18/L25 subcomplex. Contacts the 5S rRNA. Binds to the 5S rRNA independently of L5 and L18.

This is one of the proteins that binds to the 5S RNA in the ribosome where it forms part of the central protuberance. The protein is Large ribosomal subunit protein bL25 of Desulfosudis oleivorans (strain DSM 6200 / JCM 39069 / Hxd3) (Desulfococcus oleovorans).